Reading from the N-terminus, the 283-residue chain is Zinc-finger homeodomain protein 8 (283 aa).

The ZF-HD dimerization-type; degenerate zinc-finger motif lies at tyrosine 23 to alanine 68. Disordered regions lie at residues alanine 131–threonine 171 and glycine 244–valine 283. Positions glycine 148 to phenylalanine 161 are enriched in gly residues. Positions arginine 163 to proline 226 form a DNA-binding region, homeobox. A compositionally biased stretch (gly residues) spans glycine 244 to aspartate 256. Over residues glycine 257–aspartate 266 the composition is skewed to acidic residues. Low complexity predominate over residues proline 269–valine 283.

In terms of assembly, homo- and heterodimer with other ZFHD proteins.

It localises to the nucleus. In terms of biological role, putative transcription factor. This chain is Zinc-finger homeodomain protein 8 (ZHD8), found in Oryza sativa subsp. japonica (Rice).